We begin with the raw amino-acid sequence, 207 residues long: Ribosomal RNA small subunit methyltransferase G (207 aa).

Residues G73, L78, 124–125, and R139 contribute to the S-adenosyl-L-methionine site; that span reads VE.

The protein belongs to the methyltransferase superfamily. RNA methyltransferase RsmG family.

It is found in the cytoplasm. The enzyme catalyses guanosine(527) in 16S rRNA + S-adenosyl-L-methionine = N(7)-methylguanosine(527) in 16S rRNA + S-adenosyl-L-homocysteine. In terms of biological role, specifically methylates the N7 position of guanine in position 527 of 16S rRNA. The sequence is that of Ribosomal RNA small subunit methyltransferase G from Salmonella agona (strain SL483).